The following is a 493-amino-acid chain: Probable mannosyl-oligosaccharide alpha-1,2-mannosidase 1B (493 aa).

The first 18 residues, 1 to 18, serve as a signal peptide directing secretion; it reads MHLPSLSVALALVSSSLA. N-linked (GlcNAc...) asparagine glycans are attached at residues asparagine 87 and asparagine 174. Cysteine 324 and cysteine 353 are disulfide-bonded. Glutamate 367 serves as the catalytic Proton donor. Asparagine 489 carries an N-linked (GlcNAc...) asparagine glycan.

Belongs to the glycosyl hydrolase 47 family. Monomer. It depends on Ca(2+) as a cofactor. The cofactor is Mg(2+).

The protein localises to the cytoplasmic vesicle lumen. The catalysed reaction is N(4)-(alpha-D-Man-(1-&gt;2)-alpha-D-Man-(1-&gt;2)-alpha-D-Man-(1-&gt;3)-[alpha-D-Man-(1-&gt;2)-alpha-D-Man-(1-&gt;3)-[alpha-D-Man-(1-&gt;2)-alpha-D-Man-(1-&gt;6)]-alpha-D-Man-(1-&gt;6)]-beta-D-Man-(1-&gt;4)-beta-D-GlcNAc-(1-&gt;4)-beta-D-GlcNAc)-L-asparaginyl-[protein] (N-glucan mannose isomer 9A1,2,3B1,2,3) + 4 H2O = N(4)-(alpha-D-Man-(1-&gt;3)-[alpha-D-Man-(1-&gt;3)-[alpha-D-Man-(1-&gt;6)]-alpha-D-Man-(1-&gt;6)]-beta-D-Man-(1-&gt;4)-beta-D-GlcNAc-(1-&gt;4)-beta-D-GlcNAc)-L-asparaginyl-[protein] (N-glucan mannose isomer 5A1,2) + 4 beta-D-mannose. It carries out the reaction N(4)-(alpha-D-Man-(1-&gt;2)-alpha-D-Man-(1-&gt;2)-alpha-D-Man-(1-&gt;3)-[alpha-D-Man-(1-&gt;3)-[alpha-D-Man-(1-&gt;2)-alpha-D-Man-(1-&gt;6)]-alpha-D-Man-(1-&gt;6)]-beta-D-Man-(1-&gt;4)-beta-D-GlcNAc-(1-&gt;4)-beta-D-GlcNAc)-L-asparaginyl-[protein] (N-glucan mannose isomer 8A1,2,3B1,3) + 3 H2O = N(4)-(alpha-D-Man-(1-&gt;3)-[alpha-D-Man-(1-&gt;3)-[alpha-D-Man-(1-&gt;6)]-alpha-D-Man-(1-&gt;6)]-beta-D-Man-(1-&gt;4)-beta-D-GlcNAc-(1-&gt;4)-beta-D-GlcNAc)-L-asparaginyl-[protein] (N-glucan mannose isomer 5A1,2) + 3 beta-D-mannose. It functions in the pathway protein modification; protein glycosylation. Its function is as follows. Involved in the maturation of Asn-linked oligosaccharides. Progressively trims alpha-1,2-linked mannose residues from Man(9)GlcNAc(2) to produce Man(5)GlcNAc(2). This chain is Probable mannosyl-oligosaccharide alpha-1,2-mannosidase 1B (mns1B), found in Aspergillus fumigatus (strain CBS 144.89 / FGSC A1163 / CEA10) (Neosartorya fumigata).